A 122-amino-acid polypeptide reads, in one-letter code: uncharacterized protein (122 aa).

The protein belongs to the IIV-6 115R family.

This is an uncharacterized protein from Acheta domesticus (House cricket).